Here is a 456-residue protein sequence, read N- to C-terminus: UDP-N-acetylmuramate--L-alanine ligase (456 aa).

Residue 112–118 (GAHGKTT) coordinates ATP.

It belongs to the MurCDEF family.

The protein localises to the cytoplasm. The enzyme catalyses UDP-N-acetyl-alpha-D-muramate + L-alanine + ATP = UDP-N-acetyl-alpha-D-muramoyl-L-alanine + ADP + phosphate + H(+). It participates in cell wall biogenesis; peptidoglycan biosynthesis. Its function is as follows. Cell wall formation. The sequence is that of UDP-N-acetylmuramate--L-alanine ligase from Desulfatibacillum aliphaticivorans.